Consider the following 94-residue polypeptide: Small ribosomal subunit protein bS6 (94 aa).

The protein belongs to the bacterial ribosomal protein bS6 family.

Its function is as follows. Binds together with bS18 to 16S ribosomal RNA. This chain is Small ribosomal subunit protein bS6, found in Clostridium botulinum (strain Loch Maree / Type A3).